The following is a 439-amino-acid chain: ATP-dependent RNA helicase RhlB (439 aa).

The Q motif signature appears at 9 to 37; it reads QKFADLPLHPEVKQALAENGFEFCTPIQA. One can recognise a Helicase ATP-binding domain in the interval 40–219; sequence LPVLLQSKDI…YDHMNEPVKV (180 aa). 53–60 contributes to the ATP binding site; that stretch reads AQTGTGKT. The DEAD box motif lies at 165–168; it reads DEAD. Residues 243–390 form the Helicase C-terminal domain; sequence KMRLLLTLIE…VSNYDRDALL (148 aa). A disordered region spans residues 395 to 439; it reads PPVKIHRRHPAGARNLRERSGAGRPQGAHRSGGRPPRHDRTRRQP. Residues 425–439 show a composition bias toward basic residues; the sequence is SGGRPPRHDRTRRQP.

This sequence belongs to the DEAD box helicase family. RhlB subfamily. Component of the RNA degradosome, which is a multiprotein complex involved in RNA processing and mRNA degradation.

It localises to the cytoplasm. It carries out the reaction ATP + H2O = ADP + phosphate + H(+). DEAD-box RNA helicase involved in RNA degradation. Has RNA-dependent ATPase activity and unwinds double-stranded RNA. This chain is ATP-dependent RNA helicase RhlB, found in Shewanella sp. (strain ANA-3).